The primary structure comprises 658 residues: DNA ligase (658 aa).

Residues 32–36 and 81–82 contribute to the NAD(+) site; these read DAVYD and SL. Residue Lys-112 is the N6-AMP-lysine intermediate of the active site. NAD(+)-binding residues include Arg-133, Glu-167, and Lys-306. Positions 400, 403, 416, and 421 each coordinate Zn(2+). The 82-residue stretch at 577-658 folds into the BRCT domain; it reads ESSSVFNNKT…LKRLKKLDQN (82 aa).

Belongs to the NAD-dependent DNA ligase family. LigA subfamily. Mg(2+) serves as cofactor. Mn(2+) is required as a cofactor.

The enzyme catalyses NAD(+) + (deoxyribonucleotide)n-3'-hydroxyl + 5'-phospho-(deoxyribonucleotide)m = (deoxyribonucleotide)n+m + AMP + beta-nicotinamide D-nucleotide.. In terms of biological role, DNA ligase that catalyzes the formation of phosphodiester linkages between 5'-phosphoryl and 3'-hydroxyl groups in double-stranded DNA using NAD as a coenzyme and as the energy source for the reaction. It is essential for DNA replication and repair of damaged DNA. The chain is DNA ligase from Helicobacter pylori (strain G27).